The chain runs to 182 residues: NADH-quinone oxidoreductase subunit I (182 aa).

4Fe-4S ferredoxin-type domains are found at residues isoleucine 50–alanine 82 and glutamate 92–aspartate 121. Residues cysteine 62, cysteine 65, cysteine 68, cysteine 72, cysteine 101, cysteine 104, cysteine 107, and cysteine 111 each contribute to the [4Fe-4S] cluster site.

This sequence belongs to the complex I 23 kDa subunit family. In terms of assembly, NDH-1 is composed of 14 different subunits. Subunits NuoA, H, J, K, L, M, N constitute the membrane sector of the complex. Requires [4Fe-4S] cluster as cofactor.

The protein resides in the cell inner membrane. It catalyses the reaction a quinone + NADH + 5 H(+)(in) = a quinol + NAD(+) + 4 H(+)(out). NDH-1 shuttles electrons from NADH, via FMN and iron-sulfur (Fe-S) centers, to quinones in the respiratory chain. The immediate electron acceptor for the enzyme in this species is believed to be ubiquinone. Couples the redox reaction to proton translocation (for every two electrons transferred, four hydrogen ions are translocated across the cytoplasmic membrane), and thus conserves the redox energy in a proton gradient. The sequence is that of NADH-quinone oxidoreductase subunit I from Psychrobacter arcticus (strain DSM 17307 / VKM B-2377 / 273-4).